The primary structure comprises 231 residues: Probable transglycosylase SceD (231 aa).

Residues 1 to 27 (MKKTLLASSLAVGLGIVAGNAGHEAHA) form the signal peptide. Polar residues predominate over residues 103-116 (APSAVQANQVQSQE). Positions 103-153 (APSAVQANQVQSQEVEAPQNAQTQQPQASTSNNSQVTATPTESKSSEGSSV) are disordered. A compositionally biased stretch (low complexity) spans 119 to 137 (APQNAQTQQPQASTSNNSQ). Over residues 138 to 153 (VTATPTESKSSEGSSV) the composition is skewed to polar residues.

It belongs to the transglycosylase family. SceD subfamily.

The protein resides in the secreted. In terms of biological role, is able to cleave peptidoglycan and affects clumping and separation of bacterial cells. The polypeptide is Probable transglycosylase SceD (sceD) (Staphylococcus aureus (strain COL)).